A 149-amino-acid polypeptide reads, in one-letter code: MTENFRHIVRVAGVDIDGHKQVRWALTGIKGIGINFATMVLRVAGIDPFMKAGYLTDEQVKKIEEILADPVAHGIPAWAVNRPKDYETGKDMHLITAKLVMAWREDVNRLRRIRAYRGIRHELGLPVRGQRTRSNFRHGTTVGVSRRKK.

Belongs to the universal ribosomal protein uS13 family. Part of the 30S ribosomal subunit. Forms a loose heterodimer with protein S19. Forms two bridges to the 50S subunit in the 70S ribosome.

Functionally, located at the top of the head of the 30S subunit, it contacts several helices of the 16S rRNA. In the 70S ribosome it contacts the 23S rRNA (bridge B1a) and protein L5 of the 50S subunit (bridge B1b), connecting the 2 subunits; these bridges are implicated in subunit movement. In Thermococcus kodakarensis (strain ATCC BAA-918 / JCM 12380 / KOD1) (Pyrococcus kodakaraensis (strain KOD1)), this protein is Small ribosomal subunit protein uS13.